The sequence spans 179 residues: Large ribosomal subunit protein uL5 (179 aa).

Belongs to the universal ribosomal protein uL5 family. In terms of assembly, part of the 50S ribosomal subunit; part of the 5S rRNA/L5/L18/L25 subcomplex. Contacts the 5S rRNA and the P site tRNA. Forms a bridge to the 30S subunit in the 70S ribosome.

Functionally, this is one of the proteins that bind and probably mediate the attachment of the 5S RNA into the large ribosomal subunit, where it forms part of the central protuberance. In the 70S ribosome it contacts protein S13 of the 30S subunit (bridge B1b), connecting the 2 subunits; this bridge is implicated in subunit movement. Contacts the P site tRNA; the 5S rRNA and some of its associated proteins might help stabilize positioning of ribosome-bound tRNAs. This chain is Large ribosomal subunit protein uL5, found in Actinobacillus pleuropneumoniae serotype 5b (strain L20).